Consider the following 252-residue polypeptide: 2-succinyl-6-hydroxy-2,4-cyclohexadiene-1-carboxylate synthase (252 aa).

The protein belongs to the AB hydrolase superfamily. MenH family. Monomer.

The enzyme catalyses 5-enolpyruvoyl-6-hydroxy-2-succinyl-cyclohex-3-ene-1-carboxylate = (1R,6R)-6-hydroxy-2-succinyl-cyclohexa-2,4-diene-1-carboxylate + pyruvate. The protein operates within quinol/quinone metabolism; 1,4-dihydroxy-2-naphthoate biosynthesis; 1,4-dihydroxy-2-naphthoate from chorismate: step 3/7. It participates in quinol/quinone metabolism; menaquinone biosynthesis. Its function is as follows. Catalyzes a proton abstraction reaction that results in 2,5-elimination of pyruvate from 2-succinyl-5-enolpyruvyl-6-hydroxy-3-cyclohexene-1-carboxylate (SEPHCHC) and the formation of 2-succinyl-6-hydroxy-2,4-cyclohexadiene-1-carboxylate (SHCHC). The polypeptide is 2-succinyl-6-hydroxy-2,4-cyclohexadiene-1-carboxylate synthase (Salmonella heidelberg (strain SL476)).